A 53-amino-acid chain; its full sequence is Large ribosomal subunit protein bL32 (53 aa).

The interval 1–27 (MAVQQNKKSRSRRDMRRSHDALTTAAV) is disordered. Residues 7–16 (KKSRSRRDMR) show a composition bias toward basic residues.

It belongs to the bacterial ribosomal protein bL32 family.

The protein is Large ribosomal subunit protein bL32 of Glaesserella parasuis serovar 5 (strain SH0165) (Haemophilus parasuis).